A 148-amino-acid polypeptide reads, in one-letter code: Cysteine proteinase inhibitor 5 (148 aa).

The signal sequence occupies residues 1 to 25 (MASKLYYAVAPLVLVLLLLAPLSSA). Positions 99–103 (QVVSG) match the Secondary area of contact motif.

It belongs to the cystatin family. Phytocystatin subfamily.

It localises to the secreted. In terms of biological role, specific inhibitor of cysteine proteinases. Probably involved in the regulation of endogenous processes and in defense against pests and pathogens. The sequence is that of Cysteine proteinase inhibitor 5 from Oryza sativa subsp. japonica (Rice).